The primary structure comprises 66 residues: Large ribosomal subunit protein bL35 (66 aa).

Positions 22 to 41 (VMSAQRGKRHGMIKRTKKQI) are disordered. Residues 27–41 (RGKRHGMIKRTKKQI) are compositionally biased toward basic residues.

Belongs to the bacterial ribosomal protein bL35 family.

The polypeptide is Large ribosomal subunit protein bL35 (Rhodopseudomonas palustris (strain TIE-1)).